A 352-amino-acid chain; its full sequence is Putative F-box protein At5g14160 (352 aa).

In terms of domain architecture, F-box spans 14 to 60 (GVDWSELPEDVIRLVLRRLRLSDFHRARAVCSTWCRVWGDCVSKPNQ).

The chain is Putative F-box protein At5g14160 from Arabidopsis thaliana (Mouse-ear cress).